Consider the following 77-residue polypeptide: MKLTCMMIVAVLFLTAWTFATADDSGNGLENLFPKAHHEMKNPEASKLNKRCKQADEPCDVFSLDCCTGICLGVCMW.

An N-terminal signal peptide occupies residues 1–22 (MKLTCMMIVAVLFLTAWTFATA). A propeptide spanning residues 23-49 (DDSGNGLENLFPKAHHEMKNPEASKLN) is cleaved from the precursor. Disulfide bonds link cysteine 52-cysteine 67, cysteine 59-cysteine 71, and cysteine 66-cysteine 75.

Expressed by the venom duct.

The protein localises to the secreted. Its function is as follows. Omega-conotoxins act at presynaptic membranes, they bind and block voltage-gated calcium channels (Cav). Specifically acts on L-type channels. It blocks molluscan dihydropyridine-sensitive calcium channels. This Conus textile (Cloth-of-gold cone) protein is Omega-conotoxin TxVII.